A 617-amino-acid polypeptide reads, in one-letter code: Secretogranin-2 (617 aa).

Positions 1–30 (MAGAKAYRLGAVLLLIHLIFLISGAEAASF) are cleaved as a signal peptide. At Y153 the chain carries Sulfotyrosine. Residues S176 and S270 each carry the phosphoserine modification. Composition is skewed to basic and acidic residues over residues 261 to 286 (TQTQ…EMKR) and 295 to 307 (EENR…QLSE). Residues 261-307 (TQTQEEVRDSKENTEKNEQINEEMKRSGQLGLPDEENRRESKDQLSE) form a disordered region. A phosphoserine mark is found at S434, S532, S555, and S556.

It belongs to the chromogranin/secretogranin protein family. Interacts with Secretogranin III/SCG3.

It is found in the secreted. In terms of biological role, neuroendocrine protein of the granin family that regulates the biogenesis of secretory granules. In Mus musculus (Mouse), this protein is Secretogranin-2 (Scg2).